The following is a 177-amino-acid chain: ATP synthase subunit delta (177 aa).

Belongs to the ATPase delta chain family. In terms of assembly, F-type ATPases have 2 components, F(1) - the catalytic core - and F(0) - the membrane proton channel. F(1) has five subunits: alpha(3), beta(3), gamma(1), delta(1), epsilon(1). F(0) has three main subunits: a(1), b(2) and c(10-14). The alpha and beta chains form an alternating ring which encloses part of the gamma chain. F(1) is attached to F(0) by a central stalk formed by the gamma and epsilon chains, while a peripheral stalk is formed by the delta and b chains.

It localises to the cell inner membrane. Functionally, f(1)F(0) ATP synthase produces ATP from ADP in the presence of a proton or sodium gradient. F-type ATPases consist of two structural domains, F(1) containing the extramembraneous catalytic core and F(0) containing the membrane proton channel, linked together by a central stalk and a peripheral stalk. During catalysis, ATP synthesis in the catalytic domain of F(1) is coupled via a rotary mechanism of the central stalk subunits to proton translocation. In terms of biological role, this protein is part of the stalk that links CF(0) to CF(1). It either transmits conformational changes from CF(0) to CF(1) or is implicated in proton conduction. This is ATP synthase subunit delta from Shewanella piezotolerans (strain WP3 / JCM 13877).